The following is a 345-amino-acid chain: tRNA-dihydrouridine(20/20a) synthase (345 aa).

Residues 32 to 34 (PML) and Q84 each bind FMN. The active-site Proton donor is C114. Residues K153, H186, 226-228 (NGG), and 248-249 (GR) contribute to the FMN site.

Belongs to the Dus family. DusA subfamily. It depends on FMN as a cofactor.

It catalyses the reaction 5,6-dihydrouridine(20) in tRNA + NADP(+) = uridine(20) in tRNA + NADPH + H(+). The enzyme catalyses 5,6-dihydrouridine(20) in tRNA + NAD(+) = uridine(20) in tRNA + NADH + H(+). It carries out the reaction 5,6-dihydrouridine(20a) in tRNA + NADP(+) = uridine(20a) in tRNA + NADPH + H(+). The catalysed reaction is 5,6-dihydrouridine(20a) in tRNA + NAD(+) = uridine(20a) in tRNA + NADH + H(+). Functionally, catalyzes the synthesis of 5,6-dihydrouridine (D), a modified base found in the D-loop of most tRNAs, via the reduction of the C5-C6 double bond in target uridines. Specifically modifies U20 and U20a in tRNAs. This chain is tRNA-dihydrouridine(20/20a) synthase, found in Escherichia coli O157:H7.